We begin with the raw amino-acid sequence, 253 residues long: Isopentenyl-diphosphate delta-isomerase IDI1 (253 aa).

Position 61 (K61) interacts with substrate. Positions 65 and 76 each coordinate Mg(2+). Residues 74–224 (LLHRAFSVFL…SLVFTPWFKL (151 aa)) form the Nudix hydrolase domain. Substrate-binding residues include Q94 and K99. Residue C111 is part of the active site. Substrate is bound at residue S112. A Nudix box motif is present at residues 112-145 (SHPLHIPTETGSTLEDSIAGVKRAAQRKLEHELG). Mg(2+)-binding residues include E174 and E176. Residue E176 is part of the active site.

The protein belongs to the IPP isomerase type 1 family. The cofactor is Mg(2+).

The enzyme catalyses isopentenyl diphosphate = dimethylallyl diphosphate. It participates in isoprenoid biosynthesis; dimethylallyl diphosphate biosynthesis; dimethylallyl diphosphate from isopentenyl diphosphate: step 1/1. Its function is as follows. Isopentenyl-diphosphate delta-isomerase; part of the second module of ergosterol biosynthesis pathway that includes the middle steps of the pathway. IDI1 catalyzes the 1,3-allylic rearrangement of isopentenyl (IPP) to its highly electrophilic allylic isomer, dimethylallyl diphosphate (DMAPP). The second module is carried out in the vacuole and involves the formation of farnesyl diphosphate, which is also an important intermediate in the biosynthesis of ubiquinone, dolichol, heme and prenylated proteins. Activity by the mevalonate kinase ERG12 (FG05912) first converts mevalonate into 5-phosphomevalonate. 5-phosphomevalonate is then further converted to 5-diphosphomevalonate by the phosphomevalonate kinase ERG8 (FG09764). The diphosphomevalonate decarboxylase ERG19 (FG10424) then produces isopentenyl diphosphate. The isopentenyl-diphosphate delta-isomerase IDI1 (FG09722) then catalyzes the 1,3-allylic rearrangement of the homoallylic substrate isopentenyl (IPP) to its highly electrophilic allylic isomer, dimethylallyl diphosphate (DMAPP). Finally the farnesyl diphosphate synthase ERG20 (FG06784) catalyzes the sequential condensation of isopentenyl pyrophosphate with dimethylallyl pyrophosphate, and then with the resultant geranylpyrophosphate to the ultimate product farnesyl pyrophosphate. This Gibberella zeae (strain ATCC MYA-4620 / CBS 123657 / FGSC 9075 / NRRL 31084 / PH-1) (Wheat head blight fungus) protein is Isopentenyl-diphosphate delta-isomerase IDI1.